The chain runs to 402 residues: 4-hydroxy-3-methylbut-2-enyl diphosphate reductase (402 aa).

Cys-66 lines the [4Fe-4S] cluster pocket. Position 96 (His-96) interacts with (2E)-4-hydroxy-3-methylbut-2-enyl diphosphate. His-96 is a dimethylallyl diphosphate binding site. His-96 is an isopentenyl diphosphate binding site. Cys-157 lines the [4Fe-4S] cluster pocket. (2E)-4-hydroxy-3-methylbut-2-enyl diphosphate is bound at residue His-185. Dimethylallyl diphosphate is bound at residue His-185. His-185 is an isopentenyl diphosphate binding site. Glu-187 serves as the catalytic Proton donor. Thr-250 lines the (2E)-4-hydroxy-3-methylbut-2-enyl diphosphate pocket. Cys-288 provides a ligand contact to [4Fe-4S] cluster. Residues Ser-317, Ser-318, Asn-319, and Ser-379 each coordinate (2E)-4-hydroxy-3-methylbut-2-enyl diphosphate. Dimethylallyl diphosphate is bound by residues Ser-317, Ser-318, Asn-319, and Ser-379. Positions 317, 318, 319, and 379 each coordinate isopentenyl diphosphate.

The protein belongs to the IspH family. The cofactor is [4Fe-4S] cluster.

It catalyses the reaction isopentenyl diphosphate + 2 oxidized [2Fe-2S]-[ferredoxin] + H2O = (2E)-4-hydroxy-3-methylbut-2-enyl diphosphate + 2 reduced [2Fe-2S]-[ferredoxin] + 2 H(+). The catalysed reaction is dimethylallyl diphosphate + 2 oxidized [2Fe-2S]-[ferredoxin] + H2O = (2E)-4-hydroxy-3-methylbut-2-enyl diphosphate + 2 reduced [2Fe-2S]-[ferredoxin] + 2 H(+). Its pathway is isoprenoid biosynthesis; dimethylallyl diphosphate biosynthesis; dimethylallyl diphosphate from (2E)-4-hydroxy-3-methylbutenyl diphosphate: step 1/1. The protein operates within isoprenoid biosynthesis; isopentenyl diphosphate biosynthesis via DXP pathway; isopentenyl diphosphate from 1-deoxy-D-xylulose 5-phosphate: step 6/6. Functionally, catalyzes the conversion of 1-hydroxy-2-methyl-2-(E)-butenyl 4-diphosphate (HMBPP) into a mixture of isopentenyl diphosphate (IPP) and dimethylallyl diphosphate (DMAPP). Acts in the terminal step of the DOXP/MEP pathway for isoprenoid precursor biosynthesis. This is 4-hydroxy-3-methylbut-2-enyl diphosphate reductase from Gloeothece citriformis (strain PCC 7424) (Cyanothece sp. (strain PCC 7424)).